Here is a 335-residue protein sequence, read N- to C-terminus: Biotin synthase (335 aa).

A Radical SAM core domain is found at 43–269; it reads YFGKKVKLNM…INPTKEIRIA (227 aa). Cysteine 61, cysteine 65, and cysteine 68 together coordinate [4Fe-4S] cluster. Residues cysteine 104, cysteine 137, cysteine 197, and arginine 267 each contribute to the [2Fe-2S] cluster site.

The protein belongs to the radical SAM superfamily. Biotin synthase family. As to quaternary structure, homodimer. Requires [4Fe-4S] cluster as cofactor. [2Fe-2S] cluster is required as a cofactor.

The catalysed reaction is (4R,5S)-dethiobiotin + (sulfur carrier)-SH + 2 reduced [2Fe-2S]-[ferredoxin] + 2 S-adenosyl-L-methionine = (sulfur carrier)-H + biotin + 2 5'-deoxyadenosine + 2 L-methionine + 2 oxidized [2Fe-2S]-[ferredoxin]. It participates in cofactor biosynthesis; biotin biosynthesis; biotin from 7,8-diaminononanoate: step 2/2. Catalyzes the conversion of dethiobiotin (DTB) to biotin by the insertion of a sulfur atom into dethiobiotin via a radical-based mechanism. The polypeptide is Biotin synthase (Staphylococcus aureus (strain USA300)).